The primary structure comprises 336 residues: Fimbrial adhesin PapGII (336 aa).

The first 20 residues, 1 to 20 (MKKWFPALLFSLCVSGESSA), serve as a signal peptide directing secretion. Disulfide bonds link Cys-64–Cys-138 and Cys-217–Cys-249. D-galactose is bound by residues Glu-79 and 124–127 (GYKW).

The protein belongs to the adhesin PapG family.

The protein localises to the secreted. It localises to the fimbrium. Tip adhesin component of type P pili that plays a critical role in kidney infection through targeted interaction with the globoseries glycolipids containing the Gal-alpha(1-4)-Gal disaccharide present on uroepithelial cells. In turn, transcriptionally regulates host gene expression in kidney cells, leading to inflammatory pathway activation and renal tissue damage. Acts thereby as key determinant of invasive uropathogenic E.coli (UPEC), which cause pyelonephritis and urinary-source bacteremia. This chain is Fimbrial adhesin PapGII, found in Escherichia coli.